Reading from the N-terminus, the 232-residue chain is MKAGIIGAMEQEVTLLRDKIENRQTLTLAGCEIYTGTLNGVDVALLKSGIGKVSAALGTTLLLELCKPDVVINTGSAGGLAATLKVGDIVVSDEVRYHDADVTAFGYEAGQMAGCPAAFKADEKLITAVEQCIHQLDLHAVRGLVVSGDAFINGAAPLAHIRNTFPQAIAVEMEATAIGHVCHQFGTPFVVVRAISDVADQQSHLSFDEFLAVAAKQSSLLVEKLLAHLAQG.

Glu-12 functions as the Proton acceptor in the catalytic mechanism. Residues Gly-78, Ile-152, and 173-174 (ME) contribute to the substrate site. Asp-197 serves as the catalytic Proton donor.

This sequence belongs to the PNP/UDP phosphorylase family. MtnN subfamily. Homodimer.

It catalyses the reaction S-adenosyl-L-homocysteine + H2O = S-(5-deoxy-D-ribos-5-yl)-L-homocysteine + adenine. The enzyme catalyses S-methyl-5'-thioadenosine + H2O = 5-(methylsulfanyl)-D-ribose + adenine. It carries out the reaction 5'-deoxyadenosine + H2O = 5-deoxy-D-ribose + adenine. It participates in amino-acid biosynthesis; L-methionine biosynthesis via salvage pathway; S-methyl-5-thio-alpha-D-ribose 1-phosphate from S-methyl-5'-thioadenosine (hydrolase route): step 1/2. In terms of biological role, catalyzes the irreversible cleavage of the glycosidic bond in both 5'-methylthioadenosine (MTA) and S-adenosylhomocysteine (SAH/AdoHcy) to adenine and the corresponding thioribose, 5'-methylthioribose and S-ribosylhomocysteine, respectively. Also cleaves 5'-deoxyadenosine, a toxic by-product of radical S-adenosylmethionine (SAM) enzymes, into 5-deoxyribose and adenine. Thus, is required for in vivo function of the radical SAM enzymes biotin synthase and lipoic acid synthase, that are inhibited by 5'-deoxyadenosine accumulation. This is 5'-methylthioadenosine/S-adenosylhomocysteine nucleosidase from Erwinia tasmaniensis (strain DSM 17950 / CFBP 7177 / CIP 109463 / NCPPB 4357 / Et1/99).